The primary structure comprises 170 residues: Allophycocyanin subunit beta-18 (170 aa).

At Asn74 the chain carries N4-methylasparagine. Cys84 lines the (2R,3E)-phycocyanobilin pocket.

Belongs to the phycobiliprotein family. Heterodimer of an alpha and a beta chain. Contains one covalently linked bilin chromophore.

Its subcellular location is the plastid. It localises to the chloroplast thylakoid membrane. Functionally, light-harvesting photosynthetic bile pigment-protein from the phycobiliprotein complex. Allophycocyanin has a maximum absorption at approximately 650 nanometers. The polypeptide is Allophycocyanin subunit beta-18 (apcF) (Cyanidium caldarium (Red alga)).